The following is a 465-amino-acid chain: Phosphomannomutase/phosphoglucomutase (465 aa).

Catalysis depends on serine 110, which acts as the Phosphoserine intermediate. Serine 110, aspartate 244, aspartate 246, and aspartate 248 together coordinate Mg(2+). Substrate is bound by residues glutamate 327, serine 329, and histidine 331.

The protein belongs to the phosphohexose mutase family. As to quaternary structure, monomer. Mg(2+) is required as a cofactor.

It catalyses the reaction alpha-D-mannose 1-phosphate = D-mannose 6-phosphate. The catalysed reaction is alpha-D-glucose 1-phosphate = alpha-D-glucose 6-phosphate. The protein operates within nucleotide-sugar biosynthesis; GDP-alpha-D-mannose biosynthesis; alpha-D-mannose 1-phosphate from D-fructose 6-phosphate: step 2/2. It functions in the pathway bacterial outer membrane biogenesis; lipopolysaccharide biosynthesis. Functionally, the phosphomannomutase activity produces a precursor for alginate polymerization. The alginate layer causes a mucoid phenotype and provides a protective barrier against host immune defenses and antibiotics. Also involved in core-LPS biosynthesis due to its phosphoglucomutase activity. Essential for biofilm production. This Pseudomonas syringae pv. tomato (strain ATCC BAA-871 / DC3000) protein is Phosphomannomutase/phosphoglucomutase (algC).